The primary structure comprises 129 residues: Small ribosomal subunit protein uS9 (129 aa).

It belongs to the universal ribosomal protein uS9 family.

This chain is Small ribosomal subunit protein uS9, found in Nitratiruptor sp. (strain SB155-2).